Here is a 569-residue protein sequence, read N- to C-terminus: Melanophilin (569 aa).

The RabBD domain maps to 4-124; it reads KLDLSKLTDD…MGSLEWYYGH (121 aa). The FYVE-type zinc-finger motif lies at 58–112; sequence HLNETHCARCLQPYRLLVAPKRQCLDCHLFTCQDCSHAHPEEEGWLCDPCHLARV. The interval 143–430 is disordered; that stretch reads GRLQGGGGPE…MQPGRTTDQE (288 aa). Composition is skewed to basic and acidic residues over residues 352–362 and 379–390; these read ETLKRKLEEMT and EEEAGLNRKTSI. Polar residues predominate over residues 404 to 415; it reads SGQTSRQETSPR. The stretch at 431–465 forms a coiled coil; it reads LLELEDRVAVTASEVQQVESEVSNIKSKIAALQAA. The segment at 490–569 is disordered; it reads GRLGQTPKDP…FAKPVMTQRP (80 aa). Positions 526–535 are enriched in basic and acidic residues; it reads SQDKAGDSFD.

In terms of assembly, binds RAB27A that has been activated by GTP-binding via its N-terminus. Binds MYO5A via its C-terminal coiled coil domain.

The protein resides in the melanosome. In terms of biological role, rab effector protein involved in melanosome transport. Serves as link between melanosome-bound RAB27A and the motor protein MYO5A. This Felis catus (Cat) protein is Melanophilin (MLPH).